The chain runs to 225 residues: UPF0173 metal-dependent hydrolase Pcal_1074 (225 aa).

It belongs to the UPF0173 family.

The protein is UPF0173 metal-dependent hydrolase Pcal_1074 of Pyrobaculum calidifontis (strain DSM 21063 / JCM 11548 / VA1).